Consider the following 448-residue polypeptide: MKKTLRFAAVASGLVASLITVAPSASAQALRAQGASLADEVVAVVNNDVITGRELDQRVGLIARRLQQQKAPVPPTDQLRAQVLNQMVLERIQVQRAKDDGIVVDNATVQATLGRLAQANGMQLDQYKARIEAQGVPWDLFVRDARTELMLSKLREKEVDSKITVSDAEVASYIASQRGPNAGSQQDLRLEHIFVKAPANAPQADIDVAQKKAEGLLQQALASGANFERLAKNQSEADDAKKGGDLGFKSPASLPSDVVDAVSKLRPGEVNPTLIRVPDGFEIVRLVERRASQNPAASPKIVQTHVRHILLRVGEGKSESQARQQLIDIRRQIESGGDFEKFARTYSQDGSASQGGDLGWISPGETVPEFERAMNTLQDGQVSNPVRTEYGYHLIQVLGRRDAEGSVQQQMDIARQAIGQRKAEQAYSDWLRELRDSSYVQIKLPVAQ.

Positions 1-27 are cleaved as a signal peptide; sequence MKKTLRFAAVASGLVASLITVAPSASA. PpiC domains follow at residues 185-288 and 301-399; these read QQDL…RLVE and IVQT…QVLG.

The protein localises to the periplasm. The enzyme catalyses [protein]-peptidylproline (omega=180) = [protein]-peptidylproline (omega=0). Its function is as follows. Chaperone involved in the correct folding and assembly of outer membrane proteins. Recognizes specific patterns of aromatic residues and the orientation of their side chains, which are found more frequently in integral outer membrane proteins. May act in both early periplasmic and late outer membrane-associated steps of protein maturation. This is Chaperone SurA from Burkholderia pseudomallei (strain 1710b).